The chain runs to 329 residues: Ferredoxin--NADP reductase (329 aa).

FAD-binding residues include D28, Q36, Y41, A81, F115, D282, and T323.

It belongs to the ferredoxin--NADP reductase type 2 family. Homodimer. FAD is required as a cofactor.

It catalyses the reaction 2 reduced [2Fe-2S]-[ferredoxin] + NADP(+) + H(+) = 2 oxidized [2Fe-2S]-[ferredoxin] + NADPH. The protein is Ferredoxin--NADP reductase of Anaplasma marginale (strain St. Maries).